The chain runs to 586 residues: 25S rRNA (adenine-N(1))-methyltransferase (586 aa).

2 disordered regions span residues 23–229 (GTAP…LTPL) and 536–573 (GKCV…EVKD). Residues 25–41 (APAAPAPASAPAVSSSK) show a composition bias toward low complexity. The segment covering 65 to 83 (LWEKVIEQKKEGVADGVKK) has biased composition (basic and acidic residues). Over residues 99–108 (KLSNSNNDGN) the composition is skewed to polar residues. Over residues 114-123 (NNKKKNKNKN) the composition is skewed to basic residues. The span at 144–163 (GEEDEDDNNDDADEWEGIDE) shows a compositional bias: acidic residues. Residues 164–182 (DEKHASSEKPTPKKDDKKQ) are compositionally biased toward basic and acidic residues. A compositionally biased stretch (low complexity) spans 183-192 (QQLQQQQQQK). Over residues 204–213 (NGTTSNWQQD) the composition is skewed to polar residues. Residues 217-229 (PKTATPAPKLTPL) are compositionally biased toward low complexity. Residues 539-549 (VPKDGQEDTTK) show a composition bias toward basic and acidic residues. Over residues 550-559 (NKKGGQKPKP) the composition is skewed to basic residues.

It belongs to the methyltransferase superfamily. RRP8 family.

It is found in the nucleus. It localises to the nucleolus. Functionally, S-adenosyl-L-methionine-dependent methyltransferase that specifically methylates the N(1) position of a conserved adenine in helix 25.1 in 25S rRNA. Required both for ribosomal 40S and 60S subunits biogenesis. Required for efficient pre-rRNA cleavage at site A2. In Chaetomium thermophilum (strain DSM 1495 / CBS 144.50 / IMI 039719) (Thermochaetoides thermophila), this protein is 25S rRNA (adenine-N(1))-methyltransferase (RPR8).